The primary structure comprises 328 residues: Opticin (328 aa).

The first 19 residues, 1-19, serve as a signal peptide directing secretion; sequence MKFLAFLSLLSLVLQKAET. Residue N46 is glycosylated (N-linked (GlcNAc...) asparagine). Y69 bears the Sulfotyrosine mark. 2 N-linked (GlcNAc...) asparagine glycosylation sites follow: N80 and N101. The region spanning 112 to 149 is the LRRNT domain; that stretch reads LLNSQSSHGLPTCLVCVCLGSSVYCDDADLENIPPLPQ. LRR repeat units follow at residues 150 to 171, 174 to 195, 198 to 219, 244 to 265, 266 to 286, and 296 to 316; these read MTTY…DFKG, KLRR…ALRL, ALQD…PSGI, KLQF…LPLS, LRSL…TFCD, and QLED…PEAY. C285 and C318 are oxidised to a cystine. N-linked (GlcNAc...) asparagine glycosylation occurs at N308.

This sequence belongs to the small leucine-rich proteoglycan (SLRP) family. SLRP class III subfamily. In terms of assembly, homodimer. In terms of processing, O-glycosylated. Post-translationally, sulfated on tyrosine residues. Proteolytically cleaved by MMP1, MMP2, MMP3, MMP7, MMP8, MMP9, ADAMTS4, and ADAMTS5. Proteolytically cleaved by MMP13. Expressed in cartilage (at protein level). Expressed in the vitreous collagen, inner limiting membrane, lens capsule, trabecular meshwork, anterior surface of the iris, the area adjacent to the nonpigmented ciliary epithelium, and weakly expressed in the retina of the eye (at protein level). Expressed in the nonpigmented ciliary epithelium of the eye.

Its subcellular location is the secreted. It is found in the extracellular space. The protein resides in the extracellular matrix. Inhibits angiogenesis in the vitreous humor of the eye, and therefore represses neovascularization. Binds collagen fibrils. May be involved in collagen fiber organization via regulation of other members of the small leucine-rich repeat proteoglycan superfamily. This Mus musculus (Mouse) protein is Opticin (Optc).